The primary structure comprises 380 residues: Alkaline protease (380 aa).

An N-terminal signal peptide occupies residues 1-27 (MKKPLGKIVASTALLISVAFSSSIASA). Positions 28-111 (AEEAKEKYLI…IEEDAEVTTM (84 aa)) are excised as a propeptide. One can recognise an Inhibitor I9 domain in the interval 34–111 (KYLIGFNEQE…IEEDAEVTTM (78 aa)). Residue Gln-113 participates in Ca(2+) binding. Residues 116-379 (PWGISRVQAP…SGLVNAEAAT (264 aa)) form the Peptidase S8 domain. The active-site Charge relay system is Asp-143. Asp-151 is a Ca(2+) binding site. The active-site Charge relay system is the His-173. 7 residues coordinate Ca(2+): Leu-184, Asn-186, Ile-188, Val-190, Ala-274, Tyr-276, and Ala-279. Ser-326 (charge relay system) is an active-site residue.

Belongs to the peptidase S8 family. Requires Ca(2+) as cofactor.

The protein localises to the secreted. In Shouchella clausii (Alkalihalobacillus clausii), this protein is Alkaline protease.